We begin with the raw amino-acid sequence, 444 residues long: Na(+)-translocating NADH-quinone reductase subunit A (444 aa).

It belongs to the NqrA family. Composed of six subunits; NqrA, NqrB, NqrC, NqrD, NqrE and NqrF.

The catalysed reaction is a ubiquinone + n Na(+)(in) + NADH + H(+) = a ubiquinol + n Na(+)(out) + NAD(+). NQR complex catalyzes the reduction of ubiquinone-1 to ubiquinol by two successive reactions, coupled with the transport of Na(+) ions from the cytoplasm to the periplasm. NqrA to NqrE are probably involved in the second step, the conversion of ubisemiquinone to ubiquinol. This Shewanella amazonensis (strain ATCC BAA-1098 / SB2B) protein is Na(+)-translocating NADH-quinone reductase subunit A.